Consider the following 371-residue polypeptide: Probable protein phosphatase 2C 11 (371 aa).

Residues 29–49 (FFFFLFNSQTISSFIIFYLFL) traverse the membrane as a helical segment. Residues 67 to 95 (PPLSVAPLRGDANSPPPESSSSPATKSSL) form a disordered region. The span at 85-94 (SSSSPATKSS) shows a compositional bias: low complexity. The PPM-type phosphatase domain occupies 123 to 368 (SYGYSSLKGK…DNITCIVVRF (246 aa)). 4 residues coordinate Mn(2+): Asp159, Gly160, Asp320, and Asp359.

It belongs to the PP2C family. Mg(2+) is required as a cofactor. It depends on Mn(2+) as a cofactor.

It localises to the membrane. It catalyses the reaction O-phospho-L-seryl-[protein] + H2O = L-seryl-[protein] + phosphate. The enzyme catalyses O-phospho-L-threonyl-[protein] + H2O = L-threonyl-[protein] + phosphate. The protein is Probable protein phosphatase 2C 11 of Arabidopsis thaliana (Mouse-ear cress).